The primary structure comprises 156 residues: Small ribosomal subunit protein uS7 (156 aa).

Belongs to the universal ribosomal protein uS7 family. In terms of assembly, part of the 30S ribosomal subunit. Contacts proteins S9 and S11.

In terms of biological role, one of the primary rRNA binding proteins, it binds directly to 16S rRNA where it nucleates assembly of the head domain of the 30S subunit. Is located at the subunit interface close to the decoding center, probably blocks exit of the E-site tRNA. The sequence is that of Small ribosomal subunit protein uS7 from Dinoroseobacter shibae (strain DSM 16493 / NCIMB 14021 / DFL 12).